A 165-amino-acid polypeptide reads, in one-letter code: Ubiquitin-fold modifier-conjugating enzyme 1 (165 aa).

The active-site Glycyl thioester intermediate is the Cys-116.

This sequence belongs to the ubiquitin-conjugating enzyme family. UFC1 subfamily.

Functionally, E2-like enzyme which forms an intermediate with UFM1 via a thioester linkage. In Drosophila mojavensis (Fruit fly), this protein is Ubiquitin-fold modifier-conjugating enzyme 1.